The sequence spans 113 residues: Large ribosomal subunit protein bL17 (113 aa).

The protein belongs to the bacterial ribosomal protein bL17 family. Part of the 50S ribosomal subunit. Contacts protein L32.

This Clostridioides difficile (strain 630) (Peptoclostridium difficile) protein is Large ribosomal subunit protein bL17.